A 347-amino-acid chain; its full sequence is Dehydratase asqC (347 aa).

Positions 1–18 (MRPAILAAFSTLPAAAKA) are cleaved as a signal peptide. 7 N-linked (GlcNAc...) asparagine glycosylation sites follow: N51, N103, N131, N143, N215, N264, and N281.

It catalyses the reaction [(1'E)-5'-(3',3'-dimethyloxiran-2'-yl)-3'-hydroxy-3'-methylpent-1'-en-1'-yl]-quinolinone B = (1'E,3'E)-5-(3,3-dimethyloxiran-2-yl)-3-methylhexa-1,3-dienyl-quinolinone B + H2O. It participates in secondary metabolite biosynthesis. Its pathway is alkaloid biosynthesis. The protein operates within mycotoxin biosynthesis. In terms of biological role, dehydratase; part of the gene cluster that mediates the biosynthesis of the aspoquinolone mycotoxins. Within the pathway, the dehydratase asqC catalyzes the dehydratation of the epoxide at C-3 to produce (1'E,3'E)-5-(3,3-dimethyloxiran-2-yl)-3-methylhexa-1,3-dienyl-quinolinone B. The first step of the pathway is catalyzed by the nonribosomal peptide synthetase asqK that condenses anthranilic acid and O-methyl-L-tyrosine to produce 4'-methoxycyclopeptin. 4'-methoxycyclopeptin is then converted to 4'-methoxydehydrocyclopeptin by the ketoglutarate-dependent dioxygenase asqJ. AsqJ also converts its first product 4'-methoxydehydrocyclopeptin to 4'-methoxycyclopenin. The following conversion of 4'-methoxycyclopenin into 4'-methoxyviridicatin is catalyzed by the cyclopenase asqI. 4'-methoxyviridicatin is the precursor of quinolone natural products, and is further converted to quinolinone B. The prenyltransferase asqH1 then catalyzes the canonical Friedel-Crafts alkylation of quinolinone B with dimethylallyl cation to yield dimethylallyl quinolone, which is subjected to FAD-dependent dehydrogenation by the FAD-linked oxidoreductase asqF to yield conjugated aryl diene. The delta(3') double bond then serves as the site of the second alkylation with DMAPP catalyzed by the prenyltransferase asqH2 to yield a carbenium ion intermediate, which can be attacked by H(2)O to yield a styrenyl quinolone containing a C3'-hydroxyprenyl chain. The FAD-dependent monooxygenase asqG performs epoxidation of the terminal C7'-C8' olefin. Finally, after dehydratation of the epoxide at C3 by asqC, the quinolone epoxide rearrangement protein asqO catalyzes an enzymatic 3-exo-tet cyclization to yield the cyclopropyl-THF ring system in aspoquinolone. This Emericella nidulans (strain FGSC A4 / ATCC 38163 / CBS 112.46 / NRRL 194 / M139) (Aspergillus nidulans) protein is Dehydratase asqC.